Consider the following 183-residue polypeptide: ADP-ribosylation factor 3 (183 aa).

G2 is lipidated: N-myristoyl glycine. GTP contacts are provided by residues 24-31 (GLDKAGKT), 67-71 (DVGGQ), and 126-129 (NKQD).

This sequence belongs to the small GTPase superfamily. Arf family. Interacts with RUD3.

It localises to the golgi apparatus. Functionally, GTP-binding protein involved in protein trafficking; may modulate vesicle budding and uncoating within the Golgi apparatus. This chain is ADP-ribosylation factor 3 (ARF3), found in Saccharomyces cerevisiae (strain ATCC 204508 / S288c) (Baker's yeast).